The sequence spans 550 residues: Arginine--tRNA ligase (550 aa).

A 'HIGH' region motif is present at residues 124–134 (ANPTGPLHVGH).

The protein belongs to the class-I aminoacyl-tRNA synthetase family. In terms of assembly, monomer.

The protein resides in the cytoplasm. It catalyses the reaction tRNA(Arg) + L-arginine + ATP = L-arginyl-tRNA(Arg) + AMP + diphosphate. This is Arginine--tRNA ligase from Desulfovibrio desulfuricans (strain ATCC 27774 / DSM 6949 / MB).